The primary structure comprises 537 residues: Phosphoenolpyruvate carboxykinase (ATP) (537 aa).

Positions 61, 194, and 200 each coordinate substrate. ATP-binding positions include K200, H219, and 235 to 243 (GLSGTGKTT). Residues K200 and H219 each coordinate Mn(2+). D256 is a Mn(2+) binding site. Residues E284, R322, and T448 each coordinate ATP. R322 is a substrate binding site.

The protein belongs to the phosphoenolpyruvate carboxykinase (ATP) family. Mn(2+) is required as a cofactor.

It is found in the cytoplasm. The catalysed reaction is oxaloacetate + ATP = phosphoenolpyruvate + ADP + CO2. Its pathway is carbohydrate biosynthesis; gluconeogenesis. Involved in the gluconeogenesis. Catalyzes the conversion of oxaloacetate (OAA) to phosphoenolpyruvate (PEP) through direct phosphoryl transfer between the nucleoside triphosphate and OAA. The sequence is that of Phosphoenolpyruvate carboxykinase (ATP) from Bradyrhizobium sp. (strain ORS 278).